Here is a 132-residue protein sequence, read N- to C-terminus: Fluoride-specific ion channel FluC 1 (132 aa).

4 helical membrane passes run 11–31, 37–57, 70–92, and 105–125; these read AVFA…ALAI, WPWP…YFTT, RPLL…VETI, and AYSV…TVLV. The Na(+) site is built by glycine 79 and threonine 82.

The protein belongs to the fluoride channel Fluc/FEX (TC 1.A.43) family.

It is found in the cell membrane. It catalyses the reaction fluoride(in) = fluoride(out). Its activity is regulated as follows. Na(+) is not transported, but it plays an essential structural role and its presence is essential for fluoride channel function. In terms of biological role, fluoride-specific ion channel. Important for reducing fluoride concentration in the cell, thus reducing its toxicity. The sequence is that of Fluoride-specific ion channel FluC 1 from Mycobacterium bovis (strain ATCC BAA-935 / AF2122/97).